The primary structure comprises 179 residues: MLNTLFILAAEAHEAGEGGFGINLDFLEANLFNLAILLGIIIYYAPKTLGKILGDRRQKIADAIEEAETRQRKSAQILAEEEKKLAQAKAEAARIVQEAGQRAEVAKQEIATQTEADLRRMQEAAAQDLGAEQERVIAELKRRIAEQAVAKAEADLRDRLNEDTQDRLIERSIAQLGGR.

A helical membrane pass occupies residues 26-46; sequence FLEANLFNLAILLGIIIYYAP.

It belongs to the ATPase B chain family. F-type ATPases have 2 components, F(1) - the catalytic core - and F(0) - the membrane proton channel. F(1) has five subunits: alpha(3), beta(3), gamma(1), delta(1), epsilon(1). F(0) has four main subunits: a(1), b(1), b'(1) and c(10-14). The alpha and beta chains form an alternating ring which encloses part of the gamma chain. F(1) is attached to F(0) by a central stalk formed by the gamma and epsilon chains, while a peripheral stalk is formed by the delta, b and b' chains.

The protein localises to the cellular thylakoid membrane. In terms of biological role, f(1)F(0) ATP synthase produces ATP from ADP in the presence of a proton or sodium gradient. F-type ATPases consist of two structural domains, F(1) containing the extramembraneous catalytic core and F(0) containing the membrane proton channel, linked together by a central stalk and a peripheral stalk. During catalysis, ATP synthesis in the catalytic domain of F(1) is coupled via a rotary mechanism of the central stalk subunits to proton translocation. Component of the F(0) channel, it forms part of the peripheral stalk, linking F(1) to F(0). This Synechocystis sp. (strain ATCC 27184 / PCC 6803 / Kazusa) protein is ATP synthase subunit b.